We begin with the raw amino-acid sequence, 80 residues long: Cell division protein ZapB (80 aa).

The stretch at 3–80 (LEILEQLEAK…GLLGKMDEVE (78 aa)) forms a coiled coil. The interval 41–60 (LEQANNGRSEVEQEAQRARD) is disordered. The segment covering 49–60 (SEVEQEAQRARD) has biased composition (basic and acidic residues).

The protein belongs to the ZapB family. Homodimer. The ends of the coiled-coil dimer bind to each other, forming polymers. Interacts with FtsZ.

The protein localises to the cytoplasm. Functionally, non-essential, abundant cell division factor that is required for proper Z-ring formation. It is recruited early to the divisome by direct interaction with FtsZ, stimulating Z-ring assembly and thereby promoting cell division earlier in the cell cycle. Its recruitment to the Z-ring requires functional FtsA or ZipA. This chain is Cell division protein ZapB, found in Aliivibrio fischeri (strain ATCC 700601 / ES114) (Vibrio fischeri).